A 218-amino-acid polypeptide reads, in one-letter code: Ribose-5-phosphate isomerase A (218 aa).

Substrate is bound by residues 28 to 31, 81 to 84, and 94 to 97; these read TGST, DGAD, and KGGG. The active-site Proton acceptor is E103. K121 contacts substrate.

It belongs to the ribose 5-phosphate isomerase family. In terms of assembly, homodimer.

The enzyme catalyses aldehydo-D-ribose 5-phosphate = D-ribulose 5-phosphate. The protein operates within carbohydrate degradation; pentose phosphate pathway; D-ribose 5-phosphate from D-ribulose 5-phosphate (non-oxidative stage): step 1/1. In terms of biological role, catalyzes the reversible conversion of ribose-5-phosphate to ribulose 5-phosphate. This Vibrio atlanticus (strain LGP32) (Vibrio splendidus (strain Mel32)) protein is Ribose-5-phosphate isomerase A.